A 561-amino-acid chain; its full sequence is Embryonal Fyn-associated substrate (561 aa).

Residues 5 to 68 (TSTQLARALY…PANRVKLLPA (64 aa)) enclose the SH3 domain. 4 disordered regions span residues 68-123 (AGPA…CPPS), 171-215 (HPLT…PGPP), 240-372 (LADG…HNEY), and 390-422 (DKAQGSRPPDQACTGDPELPERGMPAPQEALSP). The span at 103-123 (VPPPARPCPTSGPPAGPCPPS) shows a compositional bias: pro residues. Residue Tyr-253 is modified to Phosphotyrosine; by SRC. 2 short sequence motifs (SH3-binding) span residues 305 to 311 (RPLPALP) and 335 to 341 (RPLPPPP). The segment covering 308–325 (PALPVPEAPSPSPVPSPA) has biased composition (pro residues). A compositionally biased stretch (basic and acidic residues) spans 352–372 (VEGDPEGREMEDDPAGHHNEY). The segment at 438–488 (FYAGQCQSHYSALQAAVAALMSSTQANQPPRLFVPHSKRVVVAAHRLVFVG) is divergent helix-loop-helix motif.

The protein belongs to the CAS family. Post-translationally, phosphorylated on multiple tyrosine residues. Phosphorylated on tyrosines by FYN and SRC. In terms of tissue distribution, the protein has been detected in lung and placenta.

Functionally, docking protein which plays a central coordinating role for tyrosine-kinase-based signaling related to cell adhesion. May serve as an activator of SRC and a downstream effector. Interacts with the SH3 domain of FYN and with CRK, SRC, and YES. The sequence is that of Embryonal Fyn-associated substrate (EFS) from Homo sapiens (Human).